Here is a 179-residue protein sequence, read N- to C-terminus: ATP synthase subunit delta (179 aa).

It belongs to the ATPase delta chain family. As to quaternary structure, F-type ATPases have 2 components, F(1) - the catalytic core - and F(0) - the membrane proton channel. F(1) has five subunits: alpha(3), beta(3), gamma(1), delta(1), epsilon(1). F(0) has three main subunits: a(1), b(2) and c(10-14). The alpha and beta chains form an alternating ring which encloses part of the gamma chain. F(1) is attached to F(0) by a central stalk formed by the gamma and epsilon chains, while a peripheral stalk is formed by the delta and b chains.

It localises to the cell inner membrane. In terms of biological role, f(1)F(0) ATP synthase produces ATP from ADP in the presence of a proton or sodium gradient. F-type ATPases consist of two structural domains, F(1) containing the extramembraneous catalytic core and F(0) containing the membrane proton channel, linked together by a central stalk and a peripheral stalk. During catalysis, ATP synthesis in the catalytic domain of F(1) is coupled via a rotary mechanism of the central stalk subunits to proton translocation. This protein is part of the stalk that links CF(0) to CF(1). It either transmits conformational changes from CF(0) to CF(1) or is implicated in proton conduction. The protein is ATP synthase subunit delta of Burkholderia ambifaria (strain ATCC BAA-244 / DSM 16087 / CCUG 44356 / LMG 19182 / AMMD) (Burkholderia cepacia (strain AMMD)).